We begin with the raw amino-acid sequence, 350 residues long: MSDLPELHWLHGKPTATGRLKSTPEDFKVSEDLGFTLDGEGEHVMVRVRKTGCNTAFVAEKLAKFAGIHPRDASYAGLKDRNAVTEQWFCLRMPGKEMPDFSQFTLEGCEILTTTRQQRKLRIGTLKGNHFTLVLRDISDVTSVETRLVEIQKQGVPNYFGVQRFGRNGDNLRQAWRWATNEIRVKERSKRSFYLSAARSAMFNHLVSQRLERHIYTQVLCGDAMQLHGKRSWFVAEGAELAQIQTRYEEHDIHITAPLPGKGDLGTQAQALIFETDNLADYEALWSLAQQERVDTTRRAINLLPENMSWHWLDDTTVSLSFFLPAGSFATSVVRELILLGNIDAENISE.

Substrate is bound at residue phenylalanine 27. The active-site Nucleophile is the aspartate 80. Asparagine 129 lines the substrate pocket. Residues 155–303 enclose the TRUD domain; sequence GVPNYFGVQR…VDTTRRAINL (149 aa). Phenylalanine 329 is a substrate binding site.

Belongs to the pseudouridine synthase TruD family.

The catalysed reaction is uridine(13) in tRNA = pseudouridine(13) in tRNA. Its function is as follows. Responsible for synthesis of pseudouridine from uracil-13 in transfer RNAs. The polypeptide is tRNA pseudouridine synthase D (Proteus mirabilis (strain HI4320)).